Consider the following 47-residue polypeptide: uncharacterized protein (47 aa).

This is an uncharacterized protein from Saccharomyces cerevisiae (strain ATCC 204508 / S288c) (Baker's yeast).